The chain runs to 303 residues: MLSTHLLFLATTLLTSLFHPIAAHVAKRSGSLQQITDFGDNPTGVGMYIYVPNNLASNPGIVVAIHYCTGTGPGYYSNSFYATLSEQYGFIVIYPSSPYSGGCWDVSSQATLTHNGGGNSNSIANMVTWTISEYGADSKKVFVTGSSSGAMMTNVMAATYPELFAAGTVYSGVSAGCFYSDTNQVDGWNSTCAQGDVITTPEHWASIAEAMYPGYSGSRPKMQIYHGSVDTTLYPQNYYETCKQWAGVFGYDYSAPESTEANTPQTNYETTIWGDNLQGIFATGVGHTVPIHGDKDMEWFGFA.

A signal peptide spans 1–23; it reads MLSTHLLFLATTLLTSLFHPIAA. The Charge relay system role is filled by Ser-147. N-linked (GlcNAc...) asparagine glycosylation occurs at Asn-189.

The protein belongs to the carbohydrate esterase 1 (CE1) family. AxeA subfamily. Monomer.

The protein resides in the secreted. It catalyses the reaction Deacetylation of xylans and xylo-oligosaccharides.. Its pathway is glycan degradation; xylan degradation. Its function is as follows. Acetylxylan esterase involved in the hydrolysis of xylan, a major structural heterogeneous polysaccharide found in plant biomass representing the second most abundant polysaccharide in the biosphere, after cellulose. Degrades acetylated xylans by cleaving acetyl side groups from the hetero-xylan backbone. The sequence is that of Probable acetylxylan esterase A (axeA) from Aspergillus niger (strain ATCC MYA-4892 / CBS 513.88 / FGSC A1513).